Consider the following 301-residue polypeptide: Putative F-box/LRR-repeat protein 19 (301 aa).

An F-box domain is found at 18–66 (PDWSELTRECLLDIFSRLSQEQRWIGPMLVSKNWMNACYDPTLNTIFDL). LRR repeat units follow at residues 108-133 (IRHC…WIKN), 134-159 (CPNV…DISY), 160-185 (SYGI…KRNL), 231-256 (YSTL…DLRG), and 257-282 (CISL…IKPD).

The polypeptide is Putative F-box/LRR-repeat protein 19 (FBL19) (Arabidopsis thaliana (Mouse-ear cress)).